The sequence spans 349 residues: Alanine racemase (349 aa).

The active-site Proton acceptor; specific for D-alanine is the K35. K35 is subject to N6-(pyridoxal phosphate)lysine. R130 provides a ligand contact to substrate. Y244 functions as the Proton acceptor; specific for L-alanine in the catalytic mechanism. M292 is a substrate binding site.

It belongs to the alanine racemase family. Pyridoxal 5'-phosphate serves as cofactor.

It catalyses the reaction L-alanine = D-alanine. It functions in the pathway amino-acid biosynthesis; D-alanine biosynthesis; D-alanine from L-alanine: step 1/1. Functionally, catalyzes the interconversion of L-alanine and D-alanine. May also act on other amino acids. In Dinoroseobacter shibae (strain DSM 16493 / NCIMB 14021 / DFL 12), this protein is Alanine racemase (alr).